The chain runs to 156 residues: Ribosomal RNA large subunit methyltransferase H (156 aa).

S-adenosyl-L-methionine-binding positions include Leu72, Gly103, and 122–127; that span reads LSSLTL.

The protein belongs to the RNA methyltransferase RlmH family. As to quaternary structure, homodimer.

It localises to the cytoplasm. It carries out the reaction pseudouridine(1915) in 23S rRNA + S-adenosyl-L-methionine = N(3)-methylpseudouridine(1915) in 23S rRNA + S-adenosyl-L-homocysteine + H(+). Functionally, specifically methylates the pseudouridine at position 1915 (m3Psi1915) in 23S rRNA. The chain is Ribosomal RNA large subunit methyltransferase H from Dechloromonas aromatica (strain RCB).